The sequence spans 541 residues: Glutamine-dependent NAD(+) synthetase (541 aa).

The CN hydrolase domain occupies 4–243 (FKIALAQFSP…EELYYSEFDI (240 aa)). Glu-44 (proton acceptor; for glutaminase activity) is an active-site residue. Lys-111 serves as the catalytic For glutaminase activity. Tyr-117 is a binding site for L-glutamine. The Nucleophile; for glutaminase activity role is filled by Cys-147. Ser-173 and Lys-179 together coordinate L-glutamine. Residue 286–293 (GLSGGIDS) participates in ATP binding. A deamido-NAD(+)-binding site is contributed by Asn-369. An ATP-binding site is contributed by Thr-393. Deamido-NAD(+) is bound by residues Glu-398 and Lys-510.

It in the C-terminal section; belongs to the NAD synthetase family.

The enzyme catalyses deamido-NAD(+) + L-glutamine + ATP + H2O = L-glutamate + AMP + diphosphate + NAD(+) + H(+). It participates in cofactor biosynthesis; NAD(+) biosynthesis; NAD(+) from deamido-NAD(+) (L-Gln route): step 1/1. Its function is as follows. Catalyzes the ATP-dependent amidation of deamido-NAD to form NAD. Uses L-glutamine as a nitrogen source. In vitro, can also use ammonia as donor with comparable specific activity, but cannot use nicotinate mononucleotide (NaMN) as substrate. The sequence is that of Glutamine-dependent NAD(+) synthetase from Acinetobacter baylyi (strain ATCC 33305 / BD413 / ADP1).